A 183-amino-acid polypeptide reads, in one-letter code: Glutathione-regulated potassium-efflux system ancillary protein KefG (183 aa).

The protein belongs to the NAD(P)H dehydrogenase (quinone) family. KefG subfamily. In terms of assembly, interacts with KefB.

The protein resides in the cell inner membrane. The catalysed reaction is a quinone + NADH + H(+) = a quinol + NAD(+). It carries out the reaction a quinone + NADPH + H(+) = a quinol + NADP(+). Regulatory subunit of a potassium efflux system that confers protection against electrophiles. Required for full activity of KefB. This Yersinia pestis bv. Antiqua (strain Angola) protein is Glutathione-regulated potassium-efflux system ancillary protein KefG.